The chain runs to 241 residues: CD99 antigen-like protein 2 (241 aa).

A signal peptide spans 1–23 (MAKWGSPFVFALACLALSWRVYG). Over 24 to 173 (DDFDLYDALG…TGFGSQAETG (150 aa)) the chain is Extracellular. Positions 30–168 (DALGDPTEKP…NDGSDTGFGS (139 aa)) are disordered. Residues 143 to 154 (GGGGGGGGGRAT) are compositionally biased toward gly residues. Residues 174–196 (TIAGIASALAMALIGAVSSYISY) traverse the membrane as a helical segment. The Cytoplasmic segment spans residues 197 to 241 (QQKKFCFSIQEGLNAEYVKGEHMEAVVSEEPQVKYSVVESQSAIP).

The protein belongs to the CD99 family.

The protein resides in the cell membrane. Its subcellular location is the cell junction. Its function is as follows. May function as a homophilic adhesion molecule. In Xenopus tropicalis (Western clawed frog), this protein is CD99 antigen-like protein 2 (cd99l2).